The primary structure comprises 435 residues: Methylenetetrahydrofolate--tRNA-(uracil-5-)-methyltransferase TrmFO (435 aa).

10–15 (GAGLAG) is an FAD binding site.

It belongs to the MnmG family. TrmFO subfamily. FAD serves as cofactor.

The protein resides in the cytoplasm. The catalysed reaction is uridine(54) in tRNA + (6R)-5,10-methylene-5,6,7,8-tetrahydrofolate + NADH + H(+) = 5-methyluridine(54) in tRNA + (6S)-5,6,7,8-tetrahydrofolate + NAD(+). It carries out the reaction uridine(54) in tRNA + (6R)-5,10-methylene-5,6,7,8-tetrahydrofolate + NADPH + H(+) = 5-methyluridine(54) in tRNA + (6S)-5,6,7,8-tetrahydrofolate + NADP(+). Catalyzes the folate-dependent formation of 5-methyl-uridine at position 54 (M-5-U54) in all tRNAs. The chain is Methylenetetrahydrofolate--tRNA-(uracil-5-)-methyltransferase TrmFO from Geotalea uraniireducens (strain Rf4) (Geobacter uraniireducens).